We begin with the raw amino-acid sequence, 132 residues long: Small ribosomal subunit protein uS8 (132 aa).

It belongs to the universal ribosomal protein uS8 family. As to quaternary structure, part of the 30S ribosomal subunit. Contacts proteins S5 and S12.

In terms of biological role, one of the primary rRNA binding proteins, it binds directly to 16S rRNA central domain where it helps coordinate assembly of the platform of the 30S subunit. The chain is Small ribosomal subunit protein uS8 from Sinorhizobium medicae (strain WSM419) (Ensifer medicae).